We begin with the raw amino-acid sequence, 179 residues long: Probable chemoreceptor glutamine deamidase CheD 2 (179 aa).

The protein belongs to the CheD family.

The catalysed reaction is L-glutaminyl-[protein] + H2O = L-glutamyl-[protein] + NH4(+). Probably deamidates glutamine residues to glutamate on methyl-accepting chemotaxis receptors (MCPs), playing an important role in chemotaxis. This chain is Probable chemoreceptor glutamine deamidase CheD 2, found in Ruegeria sp. (strain TM1040) (Silicibacter sp.).